We begin with the raw amino-acid sequence, 373 residues long: Dynein regulatory complex protein 9 (373 aa).

Positions 145–200 (EQAMKETIEREKNTTAAVRQLRNDLREEKLDHEEKMKEKKKGLSTLKEQLKALKMD) form a coiled coil. An IQ domain is found at 336–365 (RAQAAVIIQAWWRGHKVRMVMSGGGKKGAK).

Belongs to the DRC9 family. As to quaternary structure, component of the nexin-dynein regulatory complex (N-DRC).

Its subcellular location is the cytoplasm. The protein resides in the cytoskeleton. It is found in the flagellum axoneme. Component of the nexin-dynein regulatory complex (N-DRC), a key regulator of ciliary/flagellar motility which maintains the alignment and integrity of the distal axoneme and regulates microtubule sliding in motile axonemes. The chain is Dynein regulatory complex protein 9 from Chlamydomonas reinhardtii (Chlamydomonas smithii).